The chain runs to 131 residues: NADPH-dependent 7-cyano-7-deazaguanine reductase (131 aa).

Residue Cys-48 is the Thioimide intermediate of the active site. Asp-55 functions as the Proton donor in the catalytic mechanism. Residues 70–72 and 89–90 contribute to the substrate site; these read VEL and QE.

It belongs to the GTP cyclohydrolase I family. QueF type 1 subfamily.

The protein localises to the cytoplasm. It catalyses the reaction 7-aminomethyl-7-carbaguanine + 2 NADP(+) = 7-cyano-7-deazaguanine + 2 NADPH + 3 H(+). It functions in the pathway tRNA modification; tRNA-queuosine biosynthesis. Catalyzes the NADPH-dependent reduction of 7-cyano-7-deazaguanine (preQ0) to 7-aminomethyl-7-deazaguanine (preQ1). This chain is NADPH-dependent 7-cyano-7-deazaguanine reductase, found in Caldicellulosiruptor bescii (strain ATCC BAA-1888 / DSM 6725 / KCTC 15123 / Z-1320) (Anaerocellum thermophilum).